The chain runs to 973 residues: Probable outer membrane protein pmp13 (973 aa).

Residues 1-24 (MKTSIRKFLISTTLAPCFASTAFT) form the signal peptide. The segment covering 284–293 (QNNTASPQNS) has biased composition (polar residues). Positions 284 to 303 (QNNTASPQNSLPAPTPPPTP) are disordered. One can recognise an Autotransporter domain in the interval 691-973 (EDVPGKQLSI…TLDIGSKLRF (283 aa)).

It belongs to the PMP outer membrane protein family.

It is found in the secreted. It localises to the cell wall. Its subcellular location is the cell outer membrane. The protein is Probable outer membrane protein pmp13 (pmp13) of Chlamydia pneumoniae (Chlamydophila pneumoniae).